The sequence spans 546 residues: Chaperonin GroEL (546 aa).

ATP is bound by residues 30-33, Lys51, 87-91, Gly415, 479-481, and Asp495; these read TLGP, DGTTT, and NAA.

Belongs to the chaperonin (HSP60) family. In terms of assembly, forms a cylinder of 14 subunits composed of two heptameric rings stacked back-to-back. Interacts with the co-chaperonin GroES.

It localises to the cytoplasm. It catalyses the reaction ATP + H2O + a folded polypeptide = ADP + phosphate + an unfolded polypeptide.. Together with its co-chaperonin GroES, plays an essential role in assisting protein folding. The GroEL-GroES system forms a nano-cage that allows encapsulation of the non-native substrate proteins and provides a physical environment optimized to promote and accelerate protein folding. This Paraburkholderia phytofirmans (strain DSM 17436 / LMG 22146 / PsJN) (Burkholderia phytofirmans) protein is Chaperonin GroEL.